We begin with the raw amino-acid sequence, 61 residues long: UPF0434 protein PSPPH_1629 (61 aa).

It belongs to the UPF0434 family.

The polypeptide is UPF0434 protein PSPPH_1629 (Pseudomonas savastanoi pv. phaseolicola (strain 1448A / Race 6) (Pseudomonas syringae pv. phaseolicola (strain 1448A / Race 6))).